The following is a 119-amino-acid chain: Large ribosomal subunit protein bL20 (119 aa).

This sequence belongs to the bacterial ribosomal protein bL20 family.

In terms of biological role, binds directly to 23S ribosomal RNA and is necessary for the in vitro assembly process of the 50S ribosomal subunit. It is not involved in the protein synthesizing functions of that subunit. This Stenotrophomonas maltophilia (strain K279a) protein is Large ribosomal subunit protein bL20.